Reading from the N-terminus, the 119-residue chain is Large ribosomal subunit protein uL18 (119 aa).

It belongs to the universal ribosomal protein uL18 family. In terms of assembly, part of the 50S ribosomal subunit; part of the 5S rRNA/L5/L18/L25 subcomplex. Contacts the 5S and 23S rRNAs.

This is one of the proteins that bind and probably mediate the attachment of the 5S RNA into the large ribosomal subunit, where it forms part of the central protuberance. This chain is Large ribosomal subunit protein uL18, found in Nitratidesulfovibrio vulgaris (strain DSM 19637 / Miyazaki F) (Desulfovibrio vulgaris).